The following is a 196-amino-acid chain: Cell division protein SepF (196 aa).

Positions 15-80 are disordered; the sequence is VEDDEEFNEP…PKRSASTFSK (66 aa). Low complexity predominate over residues 57–72; it reads PAQTTPKPQTQTAAPK.

This sequence belongs to the SepF family. In terms of assembly, homodimer. Interacts with FtsZ.

It is found in the cytoplasm. Cell division protein that is part of the divisome complex and is recruited early to the Z-ring. Probably stimulates Z-ring formation, perhaps through the cross-linking of FtsZ protofilaments. Its function overlaps with FtsA. The polypeptide is Cell division protein SepF (Lactococcus lactis subsp. cremoris (strain MG1363)).